A 245-amino-acid polypeptide reads, in one-letter code: Spore membrane assembly protein 1 (245 aa).

Involved in spore and ascus formation. Required for the efficient assembly of the precursors of the prospore membrane to a continuous prospore membrane. This is Spore membrane assembly protein 1 (SMA1) from Saccharomyces cerevisiae (strain ATCC 204508 / S288c) (Baker's yeast).